We begin with the raw amino-acid sequence, 599 residues long: Elongation factor 4 (599 aa).

The 184-residue stretch at 2 to 185 (KYIRNFSIIA…RIIIDIPVPQ (184 aa)) folds into the tr-type G domain. GTP is bound by residues 14–19 (NHGKST) and 132–135 (NKID).

The protein belongs to the TRAFAC class translation factor GTPase superfamily. Classic translation factor GTPase family. LepA subfamily.

The protein localises to the cell inner membrane. The enzyme catalyses GTP + H2O = GDP + phosphate + H(+). In terms of biological role, required for accurate and efficient protein synthesis under certain stress conditions. May act as a fidelity factor of the translation reaction, by catalyzing a one-codon backward translocation of tRNAs on improperly translocated ribosomes. Back-translocation proceeds from a post-translocation (POST) complex to a pre-translocation (PRE) complex, thus giving elongation factor G a second chance to translocate the tRNAs correctly. Binds to ribosomes in a GTP-dependent manner. This Blochmanniella floridana protein is Elongation factor 4.